The chain runs to 145 residues: Putative antiporter subunit mnhG2 (145 aa).

Transmembrane regions (helical) follow at residues 11–31 (IAAV…IGIV), 51–71 (VLLT…FFSV), and 72–92 (RLLL…HLVA).

It belongs to the CPA3 antiporters (TC 2.A.63) subunit G family. May form a heterooligomeric complex that consists of seven subunits: mnhA2, mnhB2, mnhC2, mnhD2, mnhE2, mnhF2 and mnhG2.

It localises to the cell membrane. This is Putative antiporter subunit mnhG2 (mnhG2) from Staphylococcus aureus (strain JH9).